Reading from the N-terminus, the 213-residue chain is Na(+)-translocating NADH-quinone reductase subunit D (213 aa).

6 helical membrane passes run 22–42 (LIAILGICSALAVTTTVTTAL), 43–63 (TMGFAVSFVTGCSSFVVSLLR), 77–97 (IIISLFVILIDQFLKAFFFTI), 101–121 (LSVFVGLIITNCIVMGRAESM), 131–151 (FLDGLGSGLGYGWVLVCISII), and 183–203 (LGLMVLAPSAFFLLGIMIWIV).

The protein belongs to the NqrDE/RnfAE family. In terms of assembly, composed of six subunits; NqrA, NqrB, NqrC, NqrD, NqrE and NqrF.

The protein resides in the cell inner membrane. It catalyses the reaction a ubiquinone + n Na(+)(in) + NADH + H(+) = a ubiquinol + n Na(+)(out) + NAD(+). In terms of biological role, NQR complex catalyzes the reduction of ubiquinone-1 to ubiquinol by two successive reactions, coupled with the transport of Na(+) ions from the cytoplasm to the periplasm. NqrA to NqrE are probably involved in the second step, the conversion of ubisemiquinone to ubiquinol. The protein is Na(+)-translocating NADH-quinone reductase subunit D of Chlamydia trachomatis serovar L2 (strain ATCC VR-902B / DSM 19102 / 434/Bu).